The sequence spans 276 residues: NAD-capped RNA hydrolase NudC (276 aa).

Position 82 (Arg-82) interacts with substrate. Zn(2+)-binding residues include Cys-112 and Cys-115. Glu-125 provides a ligand contact to substrate. Residues Cys-130 and Cys-133 each contribute to the Zn(2+) site. Tyr-138 is a binding site for substrate. In terms of domain architecture, Nudix hydrolase spans 139–262 (PRISPSMIVL…SIARYLIDLY (124 aa)). Residues Ala-172, Glu-188, and Glu-192 each contribute to the a divalent metal cation site. The Nudix box signature appears at 173–194 (GFAEPGESAEDCLVREVREEVA). Position 206 to 213 (206 to 213 (QCWPFPHS)) interacts with substrate. Glu-233 contacts a divalent metal cation. Residue Ala-255 participates in substrate binding.

The protein belongs to the Nudix hydrolase family. NudC subfamily. Homodimer. It depends on Mg(2+) as a cofactor. Mn(2+) serves as cofactor. The cofactor is Zn(2+).

It carries out the reaction a 5'-end NAD(+)-phospho-ribonucleoside in mRNA + H2O = a 5'-end phospho-adenosine-phospho-ribonucleoside in mRNA + beta-nicotinamide D-ribonucleotide + 2 H(+). The enzyme catalyses NAD(+) + H2O = beta-nicotinamide D-ribonucleotide + AMP + 2 H(+). It catalyses the reaction NADH + H2O = reduced beta-nicotinamide D-ribonucleotide + AMP + 2 H(+). MRNA decapping enzyme that specifically removes the nicotinamide adenine dinucleotide (NAD) cap from a subset of mRNAs by hydrolyzing the diphosphate linkage to produce nicotinamide mononucleotide (NMN) and 5' monophosphate mRNA. The NAD-cap is present at the 5'-end of some mRNAs and stabilizes RNA against 5'-processing. Has preference for mRNAs with a 5'-end purine. Catalyzes the hydrolysis of a broad range of dinucleotide pyrophosphates. The polypeptide is NAD-capped RNA hydrolase NudC (Pseudomonas putida (strain W619)).